The following is a 537-amino-acid chain: uncharacterized protein (537 aa).

Belongs to the RuBisCO large chain family. Type IV subfamily.

Unknown. Probably does not have RuBisCO activity. This is an uncharacterized protein from Symbiodinium sp. (Dinoflagellate).